A 244-amino-acid chain; its full sequence is Phosphatidylinositol phosphate synthase (244 aa).

3 helical membrane passes run 24–42 (YARA…FLIR), 49–66 (TVTL…LVFY), and 72–91 (FWGT…DGNM). 48–51 (DTVT) is a binding site for a CDP-1,2-diacyl-sn-glycerol. Mg(2+) is bound by residues Asp85 and Asp88. A CDP-1,2-diacyl-sn-glycerol contacts are provided by Gly89, Arg93, and Ser99. Mg(2+)-binding residues include Asp106 and Asp110. The Proton acceptor role is filled by Asp110. The next 3 helical transmembrane spans lie at 117–137 (IFGG…LCAV), 174–190 (LVIS…HKFG), and 196–214 (VLLP…VTLI).

This sequence belongs to the CDP-alcohol phosphatidyltransferase class-I family. In terms of assembly, homodimer. Requires Mg(2+) as cofactor.

It localises to the cell membrane. The enzyme catalyses a CDP-1,2-diacyl-sn-glycerol + 1D-myo-inositol 3-phosphate = a 1,2-diacyl-sn-glycero-3-phospho-(1D-myo-inositol-3-phosphate) + CMP + H(+). It catalyses the reaction 1,2-di-(9Z-octadecenoyl)-sn-glycero-3-cytidine-5'-diphosphate + 1D-myo-inositol 3-phosphate = 1,2-di-(9Z-octadecenoyl)-sn-glycero-3-phospho-(1D-myo-inositol-3-phosphate) + CMP + H(+). It participates in phospholipid metabolism; phosphatidylinositol phosphate biosynthesis. Catalyzes the conjugation of the 1'-hydroxyl group of D-myo-inositol-3-phosphate (also named L-myo-inositol-1-phosphate) with a lipid tail of cytidine diphosphate diacylglycerol (CDP-DAG), forming phosphatidylinositol phosphate (PIP) and CMP. PIP is a precursor of phosphatidylinositol (PI) which is an essential lipid required for cell wall formation. This is Phosphatidylinositol phosphate synthase from Streptomyces avermitilis (strain ATCC 31267 / DSM 46492 / JCM 5070 / NBRC 14893 / NCIMB 12804 / NRRL 8165 / MA-4680).